The chain runs to 138 residues: Probable glycine cleavage system H protein 1 (138 aa).

In terms of domain architecture, Lipoyl-binding spans 30–112 (IATVGITDYA…YGRGWIFKLK (83 aa)). Position 71 is an N6-lipoyllysine (lysine 71).

It belongs to the GcvH family. As to quaternary structure, the glycine cleavage system is composed of four proteins: P, T, L and H. Requires (R)-lipoate as cofactor.

In terms of biological role, the glycine cleavage system catalyzes the degradation of glycine. The H protein shuttles the methylamine group of glycine from the P protein to the T protein. In Sulfolobus acidocaldarius (strain ATCC 33909 / DSM 639 / JCM 8929 / NBRC 15157 / NCIMB 11770), this protein is Probable glycine cleavage system H protein 1.